A 386-amino-acid chain; its full sequence is S-adenosylmethionine synthase (386 aa).

Position 14 (His14) interacts with ATP. Residue Asp16 coordinates Mg(2+). Glu42 provides a ligand contact to K(+). The L-methionine site is built by Glu55 and Gln101. Residues 101 to 111 (QSADIALGVDE) are flexible loop. Residues 166-168 (DGK), 233-234 (RF), Asp242, 248-249 (RK), Ala265, and Lys269 contribute to the ATP site. Asp242 lines the L-methionine pocket. Lys273 is an L-methionine binding site.

Belongs to the AdoMet synthase family. In terms of assembly, homotetramer; dimer of dimers. It depends on Mg(2+) as a cofactor. The cofactor is K(+).

Its subcellular location is the cytoplasm. It carries out the reaction L-methionine + ATP + H2O = S-adenosyl-L-methionine + phosphate + diphosphate. Its pathway is amino-acid biosynthesis; S-adenosyl-L-methionine biosynthesis; S-adenosyl-L-methionine from L-methionine: step 1/1. Catalyzes the formation of S-adenosylmethionine (AdoMet) from methionine and ATP. The overall synthetic reaction is composed of two sequential steps, AdoMet formation and the subsequent tripolyphosphate hydrolysis which occurs prior to release of AdoMet from the enzyme. This chain is S-adenosylmethionine synthase, found in Acholeplasma laidlawii (strain PG-8A).